The primary structure comprises 300 residues: L-threonine kinase (300 aa).

92-102 (PVAKGMASSTA) contributes to the ATP binding site.

This sequence belongs to the GHMP kinase family. PduX subfamily.

It is found in the cytoplasm. The catalysed reaction is L-threonine + ATP = O-phospho-L-threonine + ADP + H(+). It participates in cofactor biosynthesis; adenosylcobalamin biosynthesis. It functions in the pathway polyol metabolism; 1,2-propanediol degradation. Its function is as follows. L-threonine kinase that catalyzes the conversion of L-threonine to L-threonine-O-3-phosphate. Involved in the de novo synthesis of adenosylcobalamin (coenzyme B12) and the assimilation of cobyric acid. Uses ATP; the activity with CTP, GTP or UTP is 6, 11, and 3% of the activity with ATP, respectively. The 1,2-propanediol (1,2-PD)-specific bacterial microcompartment (BMC) concentrates low levels of 1,2-PD catabolic enzymes, concentrates volatile reaction intermediates thus enhancing pathway flux and keeps the level of toxic, mutagenic propionaldehyde low. This gene probably benefits from its induction via the Pdu promoter, rather than a physical interaction with the BMC. This Salmonella typhimurium (strain LT2 / SGSC1412 / ATCC 700720) protein is L-threonine kinase.